Here is a 48-residue protein sequence, read N- to C-terminus: Putative protein P' (48 aa).

The protein is Putative protein P' of Bos taurus (Bovine).